The following is a 450-amino-acid chain: D-inositol 3-phosphate glycosyltransferase (450 aa).

H26 contributes to the 1D-myo-inositol 3-phosphate binding site. UDP-N-acetyl-alpha-D-glucosamine is bound by residues 32-33 (QP) and G40. 1D-myo-inositol 3-phosphate is bound by residues 37–42 (DAGGMN), K95, Y128, T152, and R172. UDP-N-acetyl-alpha-D-glucosamine-binding residues include R246, K251, and Q313. Positions 322, 323, and 325 each coordinate Mg(2+). UDP-N-acetyl-alpha-D-glucosamine-binding residues include E335 and E343. T349 serves as a coordination point for Mg(2+).

The protein belongs to the glycosyltransferase group 1 family. MshA subfamily. As to quaternary structure, homodimer.

It catalyses the reaction 1D-myo-inositol 3-phosphate + UDP-N-acetyl-alpha-D-glucosamine = 1D-myo-inositol 2-acetamido-2-deoxy-alpha-D-glucopyranoside 3-phosphate + UDP + H(+). Functionally, catalyzes the transfer of a N-acetyl-glucosamine moiety to 1D-myo-inositol 3-phosphate to produce 1D-myo-inositol 2-acetamido-2-deoxy-glucopyranoside 3-phosphate in the mycothiol biosynthesis pathway. In Mycolicibacterium vanbaalenii (strain DSM 7251 / JCM 13017 / BCRC 16820 / KCTC 9966 / NRRL B-24157 / PYR-1) (Mycobacterium vanbaalenii), this protein is D-inositol 3-phosphate glycosyltransferase.